The primary structure comprises 129 residues: Glycine cleavage system H protein (129 aa).

One can recognise a Lipoyl-binding domain in the interval 24–106; that stretch reads LLKIGVSEFA…IGDGWLVILK (83 aa). Lysine 65 carries the N6-lipoyllysine modification.

It belongs to the GcvH family. The glycine cleavage system is composed of four proteins: P, T, L and H. (R)-lipoate is required as a cofactor.

Its function is as follows. The glycine cleavage system catalyzes the degradation of glycine. The H protein shuttles the methylamine group of glycine from the P protein to the T protein. The sequence is that of Glycine cleavage system H protein from Prochlorococcus marinus (strain MIT 9301).